Here is a 161-residue protein sequence, read N- to C-terminus: Peptidyl-prolyl cis-trans isomerase (161 aa).

The 155-residue stretch at 6 to 160 (FFDIKAGDER…KKIIIEDCGE (155 aa)) folds into the PPIase cyclophilin-type domain.

The protein belongs to the cyclophilin-type PPIase family. PPIase A subfamily. As to expression, found mainly in the tegument, gut epithelium, and muscle layers. Also found in the interior of the parasite.

It catalyses the reaction [protein]-peptidylproline (omega=180) = [protein]-peptidylproline (omega=0). Its activity is regulated as follows. Binds cyclosporin A (CsA). CsA mediates some of its effects via an inhibitory action on PPIase. Functionally, PPIases accelerate the folding of proteins. It catalyzes the cis-trans isomerization of proline imidic peptide bonds in oligopeptides. The polypeptide is Peptidyl-prolyl cis-trans isomerase (Schistosoma mansoni (Blood fluke)).